Consider the following 105-residue polypeptide: dATP/dGTP diphosphohydrolase (105 aa).

The protein belongs to the Caudovirales dATP/dGTP diphosphohydrolase family. Requires Co(2+) as cofactor.

It carries out the reaction dGTP + H2O = dGMP + diphosphate + H(+). The catalysed reaction is dATP + H2O = dAMP + diphosphate + H(+). It participates in purine metabolism. Catalyzes the hydrolysis of dGTP into dGMP, which is needed among other for the first step of biosynthesis of dZTP (2-amino-2'-deoxyadenosine-5'-triphosphate). This Cyanophage S-2L (Cyanobacteria phage S-2L) protein is dATP/dGTP diphosphohydrolase.